Here is a 103-residue protein sequence, read N- to C-terminus: Small ribosomal subunit protein bS6c (103 aa).

Belongs to the bacterial ribosomal protein bS6 family.

It localises to the plastid. Its subcellular location is the chloroplast. Binds together with bS18 to 16S ribosomal RNA. This chain is Small ribosomal subunit protein bS6c, found in Gracilaria tenuistipitata var. liui (Red alga).